The sequence spans 305 residues: MLGRNTWKTSAFSFLVEQMWAPLWSRSMRPGRWCSQRSCAWQTSNNTLHPLWTVPVSVPGGTRQSPINIQWRDSVYDPQLKPLRVSYEAASCLYIWNTGYLFQVEFDDATEASGISGGPLENHYRLKQFHFHWGAVNEGGSEHTVDGHAYPAELHLVHWNSVKYQNYKEAVVGENGLAVIGVFLKLGAHHQTLQRLVDILPEIKHKDARAAMRPFDPSTLLPTCWDYWTYAGSLTTPPLTESVTWIIQKEPVEVAPSQLSAFRTLLFSALGEEEKMMVNNYRPLQPLMNRKVWASFQATNEGTRS.

A mitochondrion-targeting transit peptide spans 1–38 (MLGRNTWKTSAFSFLVEQMWAPLWSRSMRPGRWCSQRS). Residues 39-296 (CAWQTSNNTL…LMNRKVWASF (258 aa)) form the Alpha-carbonic anhydrase domain. Positions 130, 132, and 155 each coordinate Zn(2+).

It belongs to the alpha-carbonic anhydrase family. Zn(2+) is required as a cofactor.

It is found in the mitochondrion. It catalyses the reaction hydrogencarbonate + H(+) = CO2 + H2O. Activated by L- and D-histidine. Activated by L- and D-phenylalanine. Activated by L-adrenaline. Inhibited by coumarins, sulfonamide derivatives such as acetazolamide and Foscarnet (phosphonoformate trisodium salt). Activated by histamine. In terms of biological role, mitochondrial carbonic anhydrase that catalyzes the reversible conversion of carbon dioxide to bicarbonate/HCO3. Mitochondria are impermeable to HCO3, and thus this intramitochondrial carbonic anhydrase is pivotal in providing HCO3 for multiple mitochondrial enzymes that catalyze the formation of essential metabolites of intermediary metabolism in the urea and Krebs cycles. This is Carbonic anhydrase 5A, mitochondrial from Homo sapiens (Human).